The sequence spans 444 residues: Glutamyl-tRNA reductase (444 aa).

Substrate contacts are provided by residues 49–52 (TCNR), serine 109, 114–116 (ETQ), and glutamine 120. Cysteine 50 (nucleophile) is an active-site residue. NADP(+) is bound at residue 189-194 (GAGKMG).

This sequence belongs to the glutamyl-tRNA reductase family. As to quaternary structure, homodimer.

The enzyme catalyses (S)-4-amino-5-oxopentanoate + tRNA(Glu) + NADP(+) = L-glutamyl-tRNA(Glu) + NADPH + H(+). It participates in porphyrin-containing compound metabolism; protoporphyrin-IX biosynthesis; 5-aminolevulinate from L-glutamyl-tRNA(Glu): step 1/2. In terms of biological role, catalyzes the NADPH-dependent reduction of glutamyl-tRNA(Glu) to glutamate 1-semialdehyde (GSA). This Bacillus cereus (strain ATCC 14579 / DSM 31 / CCUG 7414 / JCM 2152 / NBRC 15305 / NCIMB 9373 / NCTC 2599 / NRRL B-3711) protein is Glutamyl-tRNA reductase.